The sequence spans 278 residues: NAD-capped RNA hydrolase NudC (278 aa).

Residue Arg84 participates in substrate binding. Residues Cys114 and Cys117 each contribute to the Zn(2+) site. Glu127 serves as a coordination point for substrate. The Zn(2+) site is built by Cys132 and Cys135. Tyr140 contributes to the substrate binding site. Residues 141-265 (PRLSPSMIVL…IARHLIDLYL (125 aa)) form the Nudix hydrolase domain. A divalent metal cation-binding residues include Ala174, Glu190, and Glu194. Positions 175-196 (GFVEAGESVEQCVVREVREEVG) match the Nudix box motif. 208–215 (QNWPFPHS) is a binding site for substrate. Glu235 contributes to the a divalent metal cation binding site. Residue Ala257 coordinates substrate.

It belongs to the Nudix hydrolase family. NudC subfamily. Homodimer. Mg(2+) is required as a cofactor. Requires Mn(2+) as cofactor. The cofactor is Zn(2+).

It carries out the reaction a 5'-end NAD(+)-phospho-ribonucleoside in mRNA + H2O = a 5'-end phospho-adenosine-phospho-ribonucleoside in mRNA + beta-nicotinamide D-ribonucleotide + 2 H(+). It catalyses the reaction NAD(+) + H2O = beta-nicotinamide D-ribonucleotide + AMP + 2 H(+). The catalysed reaction is NADH + H2O = reduced beta-nicotinamide D-ribonucleotide + AMP + 2 H(+). Functionally, mRNA decapping enzyme that specifically removes the nicotinamide adenine dinucleotide (NAD) cap from a subset of mRNAs by hydrolyzing the diphosphate linkage to produce nicotinamide mononucleotide (NMN) and 5' monophosphate mRNA. The NAD-cap is present at the 5'-end of some mRNAs and stabilizes RNA against 5'-processing. Has preference for mRNAs with a 5'-end purine. Catalyzes the hydrolysis of a broad range of dinucleotide pyrophosphates. In Pseudomonas aeruginosa (strain LESB58), this protein is NAD-capped RNA hydrolase NudC.